We begin with the raw amino-acid sequence, 187 residues long: Threonylcarbamoyl-AMP synthase (187 aa).

One can recognise a YrdC-like domain in the interval 3-187 (QVTPSQISGI…IQTGHIFRQG (185 aa)).

It belongs to the SUA5 family. TsaC subfamily.

The protein localises to the cytoplasm. It catalyses the reaction L-threonine + hydrogencarbonate + ATP = L-threonylcarbamoyladenylate + diphosphate + H2O. Required for the formation of a threonylcarbamoyl group on adenosine at position 37 (t(6)A37) in tRNAs that read codons beginning with adenine. Catalyzes the conversion of L-threonine, HCO(3)(-)/CO(2) and ATP to give threonylcarbamoyl-AMP (TC-AMP) as the acyladenylate intermediate, with the release of diphosphate. This Shewanella amazonensis (strain ATCC BAA-1098 / SB2B) protein is Threonylcarbamoyl-AMP synthase.